A 491-amino-acid polypeptide reads, in one-letter code: Arginine decarboxylase (491 aa).

K227 carries the post-translational modification N6-(pyridoxal phosphate)lysine.

It belongs to the Orn/Lys/Arg decarboxylase class-I family. It depends on pyridoxal 5'-phosphate as a cofactor.

The protein localises to the cytoplasm. The catalysed reaction is L-arginine + H(+) = agmatine + CO2. Its pathway is amine and polyamine biosynthesis; agmatine biosynthesis; agmatine from L-arginine: step 1/1. Catalyzes the formation of agmatine from arginine. This Halalkalibacterium halodurans (strain ATCC BAA-125 / DSM 18197 / FERM 7344 / JCM 9153 / C-125) (Bacillus halodurans) protein is Arginine decarboxylase (speA).